The following is a 108-amino-acid chain: MAIDVLDVISLSLFKQQIEFEEDDRDELITLYAQAAFDYCMRWCDEPAWKVAADIPAAVKGAVLLVFADMFEHRTAQSEVQLYENAAAERMMFIHRNWRGKAESEEGS.

It belongs to the Caudoviricetes gp6/gp15 head completion protein family. Homotridecamer. Interacts with the stopper protein gp7. Interacts with the portal protein; this interaction occurs at the end of the packaging when the terminase complex is replaced by the connector.

It localises to the virion. Its function is as follows. Head completion protein that exhibits an open central channel for viral DNA ejection. Part of the head-tail connector by binding to the portal protein and to the head completion protein gp7. This Escherichia coli (Bacteriophage HK97) protein is Head completion protein gp6 (6).